The chain runs to 340 residues: MYRFLSGIKVVEIAGLAPVPHCGMMLADFGADVTVIDKKNPAIEQRLNRGKTMKQLDLKNPEDIKKVRDLCQTSDVLLDPYRPGTLEKMGLDPSTLWNNNKGLIICKISGYGQTGRMSQETGHDINYVALSGMLPTFSGVNATRPWPPANMLADFAGGGLSAAFGILSAIYARSHNGGKGCLLDCSMTEGVAYLSSFVQHYYDQPNLFTDKYALFSGECPIYRTYKTKDDKFVAVGAVEPKFYQNLFKLLNVDGRDLFVNPGKITEDLESRFLQKTRDKWANIFKGQECCVTPVLDIHEVGSYGQHVDRNSFTKTSSNWIANPSPRVWTQDELAALSSKK.

The active-site Nucleophile is Asp-154.

It belongs to the CoA-transferase III family.

The polypeptide is CaiB/baiF CoA-transferase family protein ZK892.4 (Caenorhabditis elegans).